A 245-amino-acid chain; its full sequence is 5-oxoprolinase subunit A (245 aa).

Belongs to the LamB/PxpA family. In terms of assembly, forms a complex composed of PxpA, PxpB and PxpC.

The catalysed reaction is 5-oxo-L-proline + ATP + 2 H2O = L-glutamate + ADP + phosphate + H(+). Catalyzes the cleavage of 5-oxoproline to form L-glutamate coupled to the hydrolysis of ATP to ADP and inorganic phosphate. The chain is 5-oxoprolinase subunit A from Neisseria meningitidis serogroup C (strain 053442).